A 21-amino-acid polypeptide reads, in one-letter code: Putative NADH dehydrogenase subunit PS9 (21 aa).

The polypeptide is Putative NADH dehydrogenase subunit PS9 (Pinus strobus (Eastern white pine)).